A 462-amino-acid chain; its full sequence is U2 small nuclear ribonucleoprotein auxiliary factor 35 kDa subunit-related protein 2 (462 aa).

Residues 1-13 (METAGATADATAG) show a composition bias toward low complexity. Disordered regions lie at residues 1–22 (META…RKKY), 44–66 (AELA…EEER), and 115–138 (WEEQ…EREE). A Glycyl lysine isopeptide (Lys-Gly) (interchain with G-Cter in SUMO2) cross-link involves residue Lys49. Over residues 57-66 (AEEKRLEEER) the composition is skewed to basic and acidic residues. The segment at 170–198 (EKDRANCPFYSKTGACRFGDRCSRKHNFP) adopts a C3H1-type 1 zinc-finger fold. The RRM domain occupies 202–308 (PTLLIKGMFT…RQLQCEFCPV (107 aa)). The C3H1-type 2 zinc-finger motif lies at 310 to 337 (RWKMAICGLFEVQQCPRGKHCNFLHVFR). A Phosphoserine modification is found at Ser353. Residues 354 to 462 (PDWTSSSFGK…QPQPQPQSDP (109 aa)) form a disordered region. The span at 364-379 (NSERRERASHYDEYYG) shows a compositional bias: basic and acidic residues. Position 389 is a phosphoserine (Ser389). The segment covering 392-403 (FYKRNGESDRKS) has biased composition (basic and acidic residues). The span at 404 to 417 (SSRHRVKKSHRYGM) shows a compositional bias: basic residues.

Component of the U11/U12 snRNPs that are part of the U12-type spliceosome. Interacts (via RS domain) with SRSF1 and SRSF2. Interacts with U2AF2/U2AF65. Post-translationally, phosphorylated in the RS domain by SRPK1.

The protein resides in the nucleus. In terms of biological role, pre-mRNA-binding protein required for splicing of both U2- and U12-type introns. Selectively interacts with the 3'-splice site of U2- and U12-type pre-mRNAs and promotes different steps in U2 and U12 intron splicing. Recruited to U12 pre-mRNAs in an ATP-dependent manner and is required for assembly of the prespliceosome, a precursor to other spliceosomal complexes. For U2-type introns, it is selectively and specifically required for the second step of splicing. The sequence is that of U2 small nuclear ribonucleoprotein auxiliary factor 35 kDa subunit-related protein 2 (Zrsr2) from Mus musculus (Mouse).